The primary structure comprises 253 residues: Probable transcriptional regulatory protein Mmar10_2433 (253 aa).

The protein belongs to the TACO1 family.

The protein localises to the cytoplasm. The protein is Probable transcriptional regulatory protein Mmar10_2433 of Maricaulis maris (strain MCS10) (Caulobacter maris).